A 144-amino-acid polypeptide reads, in one-letter code: 3-dehydroquinate dehydratase (144 aa).

Tyr-24 serves as the catalytic Proton acceptor. Substrate contacts are provided by Asn-76, His-82, and Asp-89. His-102 (proton donor) is an active-site residue. Substrate is bound by residues Leu-103–Ser-104 and Arg-113.

The protein belongs to the type-II 3-dehydroquinase family. Homododecamer.

The enzyme catalyses 3-dehydroquinate = 3-dehydroshikimate + H2O. It participates in metabolic intermediate biosynthesis; chorismate biosynthesis; chorismate from D-erythrose 4-phosphate and phosphoenolpyruvate: step 3/7. Its function is as follows. Catalyzes a trans-dehydration via an enolate intermediate. The sequence is that of 3-dehydroquinate dehydratase from Bordetella bronchiseptica (strain ATCC BAA-588 / NCTC 13252 / RB50) (Alcaligenes bronchisepticus).